The following is a 325-amino-acid chain: Olfactory receptor 1S1 (325 aa).

Residues 1–38 lie on the Extracellular side of the membrane; sequence MKTFSSFLQIGRNMHQGNQTTITEFILLGFFKQDEHQN. N18 carries an N-linked (GlcNAc...) asparagine glycan. A helical transmembrane segment spans residues 39–62; sequence LLFVLFLGMYLVTVIGNGLIIVAI. At 63 to 70 the chain is on the cytoplasmic side; it reads SLDTYLHT. Residues 71–92 form a helical membrane-spanning segment; it reads PMYLFLANLSFADISSISNSVP. Residues 93–113 are Extracellular-facing; the sequence is KMLVNIQTKSQSISYESCITQ. C110 and C202 form a disulfide bridge. A helical membrane pass occupies residues 114-133; sequence MYFSIVFVVIDNLLLGTMAY. Over 134 to 152 the chain is Cytoplasmic; the sequence is DHFVAICHPLNYTILMRPR. A helical membrane pass occupies residues 153–171; sequence FGILLTVISWFLSNIIALT. Over 172–208 the chain is Extracellular; sequence HTLLLIQLLFCNHNTLPHFFCDLAPLLKLSCSDTLIN. A helical membrane pass occupies residues 209-232; that stretch reads ELVLFIVGLSVIIFPFTLSFFSYV. At 233-249 the chain is on the cytoplasmic side; that stretch reads CIIRAVLRVSSTQGKWK. The helical transmembrane segment at 250–272 threads the bilayer; sequence AFSTCGSHLTVVLLFYGTIVGVY. Topologically, residues 273–285 are extracellular; the sequence is FFPSSTHPEDTDK. A helical transmembrane segment spans residues 286–305; sequence IGAVLFTVVTPMINPFIYSL. At 306–325 the chain is on the cytoplasmic side; sequence RNKDMKGALRKLINRKISSL.

This sequence belongs to the G-protein coupled receptor 1 family.

It is found in the cell membrane. Odorant receptor. In Homo sapiens (Human), this protein is Olfactory receptor 1S1 (OR1S1).